A 247-amino-acid chain; its full sequence is tRNA pseudouridine synthase A (247 aa).

Catalysis depends on Asp53, which acts as the Nucleophile. Tyr111 lines the substrate pocket.

The protein belongs to the tRNA pseudouridine synthase TruA family. Homodimer.

The catalysed reaction is uridine(38/39/40) in tRNA = pseudouridine(38/39/40) in tRNA. Functionally, formation of pseudouridine at positions 38, 39 and 40 in the anticodon stem and loop of transfer RNAs. In Bacillus licheniformis (strain ATCC 14580 / DSM 13 / JCM 2505 / CCUG 7422 / NBRC 12200 / NCIMB 9375 / NCTC 10341 / NRRL NRS-1264 / Gibson 46), this protein is tRNA pseudouridine synthase A.